A 130-amino-acid chain; its full sequence is Small ribosomal subunit protein uS9 (130 aa).

The protein belongs to the universal ribosomal protein uS9 family.

The polypeptide is Small ribosomal subunit protein uS9 (Cupriavidus pinatubonensis (strain JMP 134 / LMG 1197) (Cupriavidus necator (strain JMP 134))).